A 463-amino-acid chain; its full sequence is ATP-dependent rRNA helicase SPB4 (463 aa).

The Q motif motif lies at 4–32 (KGIEDVAMNGRLKKEIEENGFGKMTEVQL). The Helicase ATP-binding domain maps to 35-205 (IPEVLKGKDV…RVFLRNPVSI (171 aa)). 48-55 (SPTGTGKT) is a binding site for ATP. Positions 153-156 (DEAD) match the DEAD box motif. Residues 226–382 (KLLVLMDIVT…DIKSMISPEL (157 aa)) form the Helicase C-terminal domain. The disordered stretch occupies residues 444 to 463 (RDGKKRALPKKKYRKKRAIK). Residues 446 to 463 (GKKRALPKKKYRKKRAIK) show a composition bias toward basic residues.

It belongs to the DEAD box helicase family. DDX55/SPB4 subfamily. Component of pre-60S ribosomal complexes.

It localises to the nucleus. The protein localises to the nucleolus. The catalysed reaction is ATP + H2O = ADP + phosphate + H(+). In terms of biological role, ATP-binding RNA helicase involved in the biogenesis of 60S ribosomal subunits. Binds 90S pre-ribosomal particles and dissociates from pre-60S ribosomal particles after processing of 27SB pre-rRNA. Required for the normal formation of 18S rRNA through the processing of pre-rRNAs at sites A0, A1 and A2, and the normal formation of 25S and 5.8S rRNAs through the processing of pre-rRNAs at sites C1 and C2. This Encephalitozoon cuniculi (strain GB-M1) (Microsporidian parasite) protein is ATP-dependent rRNA helicase SPB4.